The chain runs to 303 residues: UDP-3-O-acyl-N-acetylglucosamine deacetylase (303 aa).

Positions 78, 237, and 241 each coordinate Zn(2+). His264 (proton donor) is an active-site residue.

The protein belongs to the LpxC family. Zn(2+) is required as a cofactor.

The catalysed reaction is a UDP-3-O-[(3R)-3-hydroxyacyl]-N-acetyl-alpha-D-glucosamine + H2O = a UDP-3-O-[(3R)-3-hydroxyacyl]-alpha-D-glucosamine + acetate. The protein operates within glycolipid biosynthesis; lipid IV(A) biosynthesis; lipid IV(A) from (3R)-3-hydroxytetradecanoyl-[acyl-carrier-protein] and UDP-N-acetyl-alpha-D-glucosamine: step 2/6. Functionally, catalyzes the hydrolysis of UDP-3-O-myristoyl-N-acetylglucosamine to form UDP-3-O-myristoylglucosamine and acetate, the committed step in lipid A biosynthesis. The chain is UDP-3-O-acyl-N-acetylglucosamine deacetylase from Pseudomonas fluorescens (strain SBW25).